The following is a 633-amino-acid chain: ATP-dependent rRNA helicase SPB4 (633 aa).

The short motif at 11–39 (FSALTPALSEWIIDAVDAMGFVKTTPVQH) is the Q motif element. The region spanning 42-253 (IPMFMKNSDV…RVGLRNPVRI (212 aa)) is the Helicase ATP-binding domain. Residue 55–62 (AVTGSGKT) coordinates ATP. Residues 119–131 (EPDDEDTDMEDAD) are compositionally biased toward acidic residues. Residues 119–140 (EPDDEDTDMEDADTPPKPTFPP) are disordered. A DEAD box motif is present at residues 201–204 (DEAD). The Helicase C-terminal domain occupies 292 to 446 (AMKKILSSLQ…EITVTDEDAK (155 aa)). Residues 530–629 (AYKDKAREKL…KQEAEDADFE (100 aa)) are a coiled coil. Composition is skewed to basic and acidic residues over residues 547–581 (DKEEGTKKKQHKKEDREKSAWTEQKESKATKEVRR) and 588–623 (REHERLAKMTDEERKEEDRVQAMIEQMRKKVAKQEA). The segment at 547–633 (DKEEGTKKKQ…EDADFEGFSD (87 aa)) is disordered. Residues 624 to 633 (EDADFEGFSD) are compositionally biased toward acidic residues.

It belongs to the DEAD box helicase family. DDX55/SPB4 subfamily. Component of pre-60S ribosomal complexes.

The protein resides in the nucleus. It localises to the nucleolus. The enzyme catalyses ATP + H2O = ADP + phosphate + H(+). In terms of biological role, ATP-binding RNA helicase involved in the biogenesis of 60S ribosomal subunits. Binds 90S pre-ribosomal particles and dissociates from pre-60S ribosomal particles after processing of 27SB pre-rRNA. Required for the normal formation of 18S rRNA through the processing of pre-rRNAs at sites A0, A1 and A2, and the normal formation of 25S and 5.8S rRNAs through the processing of pre-rRNAs at sites C1 and C2. The sequence is that of ATP-dependent rRNA helicase SPB4 from Phaeosphaeria nodorum (strain SN15 / ATCC MYA-4574 / FGSC 10173) (Glume blotch fungus).